Reading from the N-terminus, the 402-residue chain is Arginine deiminase (402 aa).

The active-site Amidino-cysteine intermediate is Cys392.

This sequence belongs to the arginine deiminase family.

The protein localises to the cytoplasm. It carries out the reaction L-arginine + H2O = L-citrulline + NH4(+). It participates in amino-acid degradation; L-arginine degradation via ADI pathway; carbamoyl phosphate from L-arginine: step 1/2. The sequence is that of Arginine deiminase from Mycobacterium avium (strain 104).